A 253-amino-acid polypeptide reads, in one-letter code: ABC transporter D-alanine-binding periplasmic protein (253 aa).

An N-terminal signal peptide occupies residues 1-22 (MLSKKFGLSMIVLGIMSSSAFA). D-alanine contacts are provided by glycine 95, serine 97, arginine 102, alanine 147, and glutamate 191.

Belongs to the bacterial solute-binding protein 3 family. As to quaternary structure, monomer.

The protein localises to the periplasm. Its function is as follows. Part of the ABC transporter complex dalSTUV, that imports D-alanine into the cytoplasm. Helps protect the organism from oxidative killing by host neutrophils through sequestration of D-alanine, a substrate that is converted to hydrogen peroxide by the host enzyme DAO (D-amino acid oxidase). DalS shuttles D-alanine from the periplasm to the DalTUV complex situated in the inner membrane and through hydrolysis of ATP, D-alanine is transported across the membrane into the cytoplasm. Not required for the metabolism of D-alanine found in the stem peptide of peptidoglycan. This is ABC transporter D-alanine-binding periplasmic protein from Salmonella typhimurium (strain LT2 / SGSC1412 / ATCC 700720).